The following is a 413-amino-acid chain: Serine/threonine-protein kinase SSN3 (413 aa).

Residues 26 to 355 enclose the Protein kinase domain; the sequence is YHIVGFISSG…AQEALEHPYF (330 aa). Residues 32 to 40 and lysine 56 contribute to the ATP site; that span reads ISSGTYGRV. Aspartate 158 serves as the catalytic Proton acceptor. Residues 376 to 385 are compositionally biased toward basic and acidic residues; that stretch reads RRVTQDDNDI. A disordered region spans residues 376–413; that stretch reads RRVTQDDNDIRSGSLPGTKRSGLPDDSLMGRASKRLKE.

It belongs to the protein kinase superfamily. CMGC Ser/Thr protein kinase family. CDC2/CDKX subfamily. Component of the srb8-11 complex, a regulatory module of the Mediator complex. Mg(2+) serves as cofactor.

Its subcellular location is the nucleus. The enzyme catalyses L-seryl-[protein] + ATP = O-phospho-L-seryl-[protein] + ADP + H(+). The catalysed reaction is L-threonyl-[protein] + ATP = O-phospho-L-threonyl-[protein] + ADP + H(+). It carries out the reaction [DNA-directed RNA polymerase] + ATP = phospho-[DNA-directed RNA polymerase] + ADP + H(+). Component of the srb8-11 complex. The srb8-11 complex is a regulatory module of the Mediator complex which is itself involved in regulation of basal and activated RNA polymerase II-dependent transcription. The srb8-11 complex may be involved in the transcriptional repression of a subset of genes regulated by Mediator. It may inhibit the association of the Mediator complex with RNA polymerase II to form the holoenzyme complex. The srb8-11 complex phosphorylates the C-terminal domain (CTD) of the largest subunit of RNA polymerase II. In Aspergillus oryzae (strain ATCC 42149 / RIB 40) (Yellow koji mold), this protein is Serine/threonine-protein kinase SSN3 (ssn3).